The chain runs to 1025 residues: Multidrug resistance protein MdtC (1025 aa).

A run of 12 helical transmembrane segments spans residues 3–23 (FFAL…AITL), 333–353 (EVEQ…FLFL), 360–380 (IIPA…MYLC), 387–407 (LSLM…IVVL), 431–451 (VGFT…PLLL), 463–483 (FAVT…TLTP), 528–548 (LVGV…ISIP), 853–873 (VILI…LYES), 875–895 (VHPL…LLAL), 897–917 (LFNA…IGIV), 953–973 (PIMM…LSGG), and 984–1004 (ITIV…TPVV).

It belongs to the resistance-nodulation-cell division (RND) (TC 2.A.6) family. MdtC subfamily. Part of a tripartite efflux system composed of MdtA, MdtB and MdtC. MdtC forms a heteromultimer with MdtB.

The protein localises to the cell inner membrane. In terms of biological role, the MdtABC tripartite complex confers resistance against novobiocin and deoxycholate. This is Multidrug resistance protein MdtC from Escherichia coli O7:K1 (strain IAI39 / ExPEC).